The sequence spans 275 residues: Putative ABC transporter permease protein ORF2 (275 aa).

Helical transmembrane passes span 11–31 (YFIFLAVWTLIADVPFLFMLF), 74–94 (IAVSISVVLILIISSMAAFAF), 108–128 (LIIAGMAIPIHVTLIPIYVLT), 136–156 (TVFALIGPYVALSLPMSIFIL), 185–205 (ILLPLSAPALITVGIYNGTYL), and 239–259 (IPAIMAFLTLSLLPMLIAYIF). An ABC transmembrane type-1 domain is found at 69-260 (LKNSVIAVSI…LPMLIAYIFG (192 aa)).

This sequence belongs to the binding-protein-dependent transport system permease family. MalFG subfamily.

The protein localises to the cell membrane. This chain is Putative ABC transporter permease protein ORF2, found in Caldicellulosiruptor sp. (strain Rt8B.4).